Reading from the N-terminus, the 57-residue chain is Potassium channel toxin alpha-KTx 26.3 (57 aa).

Residues 1-15 (MSGLSVFILIALVLS) form the signal peptide. Positions 16-24 (VIIDVLNNS) are excised as a propeptide. Intrachain disulfides connect Cys30-Cys48, Cys34-Cys53, and Cys38-Cys55.

The protein belongs to the short scorpion toxin superfamily. Potassium channel inhibitor family. Alpha-KTx 26 subfamily. In terms of tissue distribution, expressed by the venom gland.

The protein localises to the secreted. Recombinant toxin that reversibly inhibits the potassium current of mKv1.3/KCNA3 channel stably expressed in COS7 cells (IC(50)=150 nM). This is Potassium channel toxin alpha-KTx 26.3 from Mesobuthus gibbosus (Mediterranean checkered scorpion).